Reading from the N-terminus, the 505-residue chain is 2,3-bisphosphoglycerate-independent phosphoglycerate mutase (505 aa).

Residues Asp-13 and Ser-63 each coordinate Mn(2+). Catalysis depends on Ser-63, which acts as the Phosphoserine intermediate. Substrate is bound by residues His-124, 153-154 (RD), Arg-183, Arg-189, 254-257 (RADR), and Lys-330. The Mn(2+) site is built by Asp-396, His-400, Asp-437, His-438, and His-456.

The protein belongs to the BPG-independent phosphoglycerate mutase family. Monomer. Mn(2+) is required as a cofactor.

The enzyme catalyses (2R)-2-phosphoglycerate = (2R)-3-phosphoglycerate. The protein operates within carbohydrate degradation; glycolysis; pyruvate from D-glyceraldehyde 3-phosphate: step 3/5. Its function is as follows. Catalyzes the interconversion of 2-phosphoglycerate and 3-phosphoglycerate. This Dinoroseobacter shibae (strain DSM 16493 / NCIMB 14021 / DFL 12) protein is 2,3-bisphosphoglycerate-independent phosphoglycerate mutase.